Here is a 530-residue protein sequence, read N- to C-terminus: Arginine--tRNA ligase (530 aa).

The short motif at Ala113 to His123 is the 'HIGH' region element.

This sequence belongs to the class-I aminoacyl-tRNA synthetase family. Monomer.

It localises to the cytoplasm. It catalyses the reaction tRNA(Arg) + L-arginine + ATP = L-arginyl-tRNA(Arg) + AMP + diphosphate. The protein is Arginine--tRNA ligase of Campylobacter jejuni subsp. jejuni serotype O:6 (strain 81116 / NCTC 11828).